Consider the following 429-residue polypeptide: Aspartate--tRNA(Asp/Asn) ligase (429 aa).

Glu-166 is an L-aspartate binding site. The segment at 188 to 191 is aspartate; it reads QLYK. Arg-210 is a binding site for L-aspartate. Residues 210-212, 218-220, and Glu-352 each bind ATP; these read RAE and RHL. Residues Glu-352 and Ser-355 each coordinate Mg(2+). 2 residues coordinate L-aspartate: Ser-355 and Arg-359. 400-403 serves as a coordination point for ATP; that stretch reads GAER.

This sequence belongs to the class-II aminoacyl-tRNA synthetase family. Type 2 subfamily. Homodimer. The cofactor is Mg(2+).

The protein resides in the cytoplasm. It catalyses the reaction tRNA(Asx) + L-aspartate + ATP = L-aspartyl-tRNA(Asx) + AMP + diphosphate. In terms of biological role, aspartyl-tRNA synthetase with relaxed tRNA specificity since it is able to aspartylate not only its cognate tRNA(Asp) but also tRNA(Asn). Reaction proceeds in two steps: L-aspartate is first activated by ATP to form Asp-AMP and then transferred to the acceptor end of tRNA(Asp/Asn). In Methanocorpusculum labreanum (strain ATCC 43576 / DSM 4855 / Z), this protein is Aspartate--tRNA(Asp/Asn) ligase.